A 478-amino-acid polypeptide reads, in one-letter code: Ribulose bisphosphate carboxylase large chain (478 aa).

Residues 1–2 constitute a propeptide that is removed on maturation; it reads MS. Substrate-binding residues include N123 and T173. K175 serves as the catalytic Proton acceptor. Substrate is bound at residue K177. Residues K201, D203, and E204 each coordinate Mg(2+). Position 201 is an N6-carboxylysine (K201). The residue at position 208 (S208) is a Phosphoserine. H294 acts as the Proton acceptor in catalysis. 2 residues coordinate substrate: R295 and H327. T330 carries the post-translational modification Phosphothreonine. A substrate-binding site is contributed by S379.

It belongs to the RuBisCO large chain family. Type I subfamily. Heterohexadecamer of 8 large chains and 8 small chains; disulfide-linked. The disulfide link is formed within the large subunit homodimers. Mg(2+) is required as a cofactor. The disulfide bond which can form in the large chain dimeric partners within the hexadecamer appears to be associated with oxidative stress and protein turnover.

It is found in the plastid. The protein localises to the chloroplast. It carries out the reaction 2 (2R)-3-phosphoglycerate + 2 H(+) = D-ribulose 1,5-bisphosphate + CO2 + H2O. It catalyses the reaction D-ribulose 1,5-bisphosphate + O2 = 2-phosphoglycolate + (2R)-3-phosphoglycerate + 2 H(+). RuBisCO catalyzes two reactions: the carboxylation of D-ribulose 1,5-bisphosphate, the primary event in carbon dioxide fixation, as well as the oxidative fragmentation of the pentose substrate in the photorespiration process. Both reactions occur simultaneously and in competition at the same active site. The protein is Ribulose bisphosphate carboxylase large chain of Lepidium virginicum (Virginia pepperweed).